A 390-amino-acid polypeptide reads, in one-letter code: Transforming growth factor beta-1 proprotein (390 aa).

Residues 1–29 (MPPSGLRLLPLLLPLPWLLVLTPGRPAAG) form the signal peptide. The straightjacket domain stretch occupies residues 30–74 (LSTCKTIDMELVKRKRIEAIRGQILSKLRLASPPSQGEVPPGPLP). An arm domain region spans residues 75-271 (EAVLALYNST…ATPLERAQHL (197 aa)). Asn82, Asn136, and Asn176 each carry an N-linked (GlcNAc...) asparagine glycan. Positions 226–252 (DSKDNKLHVEINGISPKRRGDLGTIHD) are bowtie tail. Residues 244–246 (RGD) carry the Cell attachment site motif. 4 cysteine pairs are disulfide-bonded: Cys285–Cys294, Cys293–Cys356, Cys322–Cys387, and Cys326–Cys389.

The protein belongs to the TGF-beta family. Homodimer; disulfide-linked. Interacts with the serine proteases, HTRA1 and HTRA3: the interaction with either inhibits TGFB1-mediated signaling and the HTRA protease activity is required for this inhibition. May interact with THSD4; this interaction may lead to sequestration by FBN1 microfibril assembly and attenuation of TGFB signaling. Interacts with CD109, DPT and ASPN. Interacts with EFEMP2. Interacts with TSKU; the interaction contributes to regulation of the hair cycle. Interacts with TGFBR3. In terms of assembly, homodimer; disulfide-linked. Interacts with transforming growth factor beta-1 (TGF-beta-1) chain; interaction is non-covalent and maintains TGF-beta-1 in a latent state; each latency-associated peptide (LAP) monomer interacts with TGF-beta-1 in the other monomer. Interacts with LTBP1; leading to regulation of TGF-beta-1 activation. Interacts with LRRC32/GARP; leading to regulation of TGF-beta-1 activation on the surface of activated regulatory T-cells (Tregs). Interacts with LRRC33/NRROS; leading to regulation of TGF-beta-1 activation in macrophages and microglia. Interacts (via cell attachment site) with integrins ITGAV and ITGB6 (ITGAV:ITGB6), leading to release of the active TGF-beta-1. Interacts with NREP; the interaction results in a decrease in TGFB1 autoinduction. Interacts with HSP90AB1; inhibits latent TGFB1 activation. As to quaternary structure, homodimer; disulfide-linked. Interacts with TGF-beta receptors (TGFBR1 and TGFBR2), leading to signal transduction. Post-translationally, transforming growth factor beta-1 proprotein: The precursor proprotein is cleaved in the Golgi apparatus by FURIN to form Transforming growth factor beta-1 (TGF-beta-1) and Latency-associated peptide (LAP) chains, which remain non-covalently linked, rendering TGF-beta-1 inactive. N-glycosylated. Deglycosylation leads to activation of Transforming growth factor beta-1 (TGF-beta-1); mechanisms triggering deglycosylation-driven activation of TGF-beta-1 are however unclear. Expressed in cardiomyocytes. Weakly expressed in the mammary glands, with a slight increase of expression following onset of involution.

Its subcellular location is the secreted. The protein localises to the extracellular space. The protein resides in the extracellular matrix. Functionally, transforming growth factor beta-1 proprotein: Precursor of the Latency-associated peptide (LAP) and Transforming growth factor beta-1 (TGF-beta-1) chains, which constitute the regulatory and active subunit of TGF-beta-1, respectively. Required to maintain the Transforming growth factor beta-1 (TGF-beta-1) chain in a latent state during storage in extracellular matrix. Associates non-covalently with TGF-beta-1 and regulates its activation via interaction with 'milieu molecules', such as LTBP1, LRRC32/GARP and LRRC33/NRROS, that control activation of TGF-beta-1. Interaction with LRRC33/NRROS regulates activation of TGF-beta-1 in macrophages and microglia. Interaction with LRRC32/GARP controls activation of TGF-beta-1 on the surface of activated regulatory T-cells (Tregs). Interaction with integrins (ITGAV:ITGB6 or ITGAV:ITGB8) results in distortion of the Latency-associated peptide chain and subsequent release of the active TGF-beta-1. Its function is as follows. Multifunctional protein that regulates the growth and differentiation of various cell types and is involved in various processes, such as normal development, immune function, microglia function and responses to neurodegeneration. Activation into mature form follows different steps: following cleavage of the proprotein in the Golgi apparatus, Latency-associated peptide (LAP) and Transforming growth factor beta-1 (TGF-beta-1) chains remain non-covalently linked rendering TGF-beta-1 inactive during storage in extracellular matrix. At the same time, LAP chain interacts with 'milieu molecules', such as LTBP1, LRRC32/GARP and LRRC33/NRROS that control activation of TGF-beta-1 and maintain it in a latent state during storage in extracellular milieus. TGF-beta-1 is released from LAP by integrins (ITGAV:ITGB6 or ITGAV:ITGB8): integrin-binding to LAP stabilizes an alternative conformation of the LAP bowtie tail and results in distortion of the LAP chain and subsequent release of the active TGF-beta-1. Once activated following release of LAP, TGF-beta-1 acts by binding to TGF-beta receptors (TGFBR1 and TGFBR2), which transduce signal. While expressed by many cells types, TGF-beta-1 only has a very localized range of action within cell environment thanks to fine regulation of its activation by Latency-associated peptide chain (LAP) and 'milieu molecules'. Plays an important role in bone remodeling: acts as a potent stimulator of osteoblastic bone formation, causing chemotaxis, proliferation and differentiation in committed osteoblasts. Can promote either T-helper 17 cells (Th17) or regulatory T-cells (Treg) lineage differentiation in a concentration-dependent manner. At high concentrations, leads to FOXP3-mediated suppression of RORC and down-regulation of IL-17 expression, favoring Treg cell development. At low concentrations in concert with IL-6 and IL-21, leads to expression of the IL-17 and IL-23 receptors, favoring differentiation to Th17 cells. Stimulates sustained production of collagen through the activation of CREB3L1 by regulated intramembrane proteolysis (RIP). Mediates SMAD2/3 activation by inducing its phosphorylation and subsequent translocation to the nucleus. Positively regulates odontoblastic differentiation in dental papilla cells, via promotion of IPO7-mediated translocation of phosphorylated SMAD2 to the nucleus and subsequent transcription of target genes. Can induce epithelial-to-mesenchymal transition (EMT) and cell migration in various cell types. The chain is Transforming growth factor beta-1 proprotein from Mus musculus (Mouse).